Consider the following 145-residue polypeptide: uncharacterized protein (145 aa).

This is an uncharacterized protein from Sinorhizobium fredii (strain NBRC 101917 / NGR234).